An 83-amino-acid polypeptide reads, in one-letter code: Translation initiation factor IF-1 (83 aa).

An S1-like domain is found at 1-72 (MAKEELIEMQ…SKGRITFRHL (72 aa)).

The protein belongs to the IF-1 family. As to quaternary structure, component of the 30S ribosomal translation pre-initiation complex which assembles on the 30S ribosome in the order IF-2 and IF-3, IF-1 and N-formylmethionyl-tRNA(fMet); mRNA recruitment can occur at any time during PIC assembly.

It localises to the cytoplasm. One of the essential components for the initiation of protein synthesis. Stabilizes the binding of IF-2 and IF-3 on the 30S subunit to which N-formylmethionyl-tRNA(fMet) subsequently binds. Helps modulate mRNA selection, yielding the 30S pre-initiation complex (PIC). Upon addition of the 50S ribosomal subunit IF-1, IF-2 and IF-3 are released leaving the mature 70S translation initiation complex. This chain is Translation initiation factor IF-1, found in Verminephrobacter eiseniae (strain EF01-2).